The primary structure comprises 126 residues: Large ribosomal subunit protein bL12 (126 aa).

Belongs to the bacterial ribosomal protein bL12 family. Homodimer. Part of the ribosomal stalk of the 50S ribosomal subunit. Forms a multimeric L10(L12)X complex, where L10 forms an elongated spine to which 2 to 4 L12 dimers bind in a sequential fashion. Binds GTP-bound translation factors.

Functionally, forms part of the ribosomal stalk which helps the ribosome interact with GTP-bound translation factors. Is thus essential for accurate translation. The sequence is that of Large ribosomal subunit protein bL12 from Methylobacterium sp. (strain 4-46).